The following is a 422-amino-acid chain: UDP-N-acetylglucosamine 1-carboxyvinyltransferase (422 aa).

Lys-22 to Asn-23 contacts phosphoenolpyruvate. Position 93 (Arg-93) interacts with UDP-N-acetyl-alpha-D-glucosamine. Cys-117 acts as the Proton donor in catalysis. At Cys-117 the chain carries 2-(S-cysteinyl)pyruvic acid O-phosphothioketal. Residues Arg-122–Leu-126, Asp-308, and Leu-330 each bind UDP-N-acetyl-alpha-D-glucosamine.

This sequence belongs to the EPSP synthase family. MurA subfamily.

It is found in the cytoplasm. It catalyses the reaction phosphoenolpyruvate + UDP-N-acetyl-alpha-D-glucosamine = UDP-N-acetyl-3-O-(1-carboxyvinyl)-alpha-D-glucosamine + phosphate. It participates in cell wall biogenesis; peptidoglycan biosynthesis. Cell wall formation. Adds enolpyruvyl to UDP-N-acetylglucosamine. The chain is UDP-N-acetylglucosamine 1-carboxyvinyltransferase from Helicobacter pylori (strain Shi470).